A 1207-amino-acid polypeptide reads, in one-letter code: Putative coatomer subunit alpha (1207 aa).

8 WD repeats span residues 9–50 (SRSS…DRFD), 51–90 (GHDG…LLFS), 93–134 (GHMD…AILT), 135–174 (GHSH…MKNA), 210–249 (GHDR…AWEV), 254–293 (GHFN…AVQT), 296–336 (RDND…HALN), and 370–411 (SAWL…NSLP). A phosphoserine mark is found at Ser-409 and Ser-942.

Oligomeric complex that consists of at least the alpha, beta, beta', gamma, delta, epsilon and zeta subunits.

It is found in the cytoplasm. It localises to the golgi apparatus membrane. In terms of biological role, the coatomer is a cytosolic protein complex that binds to dilysine motifs and reversibly associates with Golgi non-clathrin-coated vesicles, which further mediate biosynthetic protein transport from the ER, via the Golgi up to the trans Golgi network. Coatomer complex is required for budding from Golgi membranes, and is essential for the retrograde Golgi-to-ER transport of dilysine-tagged proteins. This chain is Putative coatomer subunit alpha, found in Schizosaccharomyces pombe (strain 972 / ATCC 24843) (Fission yeast).